A 473-amino-acid polypeptide reads, in one-letter code: Pre-mRNA-splicing factor prp5 (473 aa).

WD repeat units lie at residues G161–D191, G203–D233, G245–D275, G287–D317, H329–K358, G370–D399, and D419–K449.

It belongs to the WD repeat PRL1/PRL2 family. As to quaternary structure, belongs to the 40S cdc5-associated complex (or cwf complex), a spliceosome sub-complex reminiscent of a late-stage spliceosome composed of the U2, U5 and U6 snRNAs and at least brr2, cdc5, cwf2/prp3, cwf3/syf1, cwf4/syf3, cwf5/ecm2, spp42/cwf6, cwf7/spf27, cwf8, cwf9, cwf10, cwf11, cwf12, prp45/cwf13, cwf14, cwf15, cwf16, cwf17, cwf18, cwf19, cwf20, cwf21, cwf22, cwf23, cwf24, cwf25, cwf26, cyp7/cwf27, cwf28, cwf29/ist3, lea1, msl1, prp5/cwf1, prp10, prp12/sap130, prp17, prp22, sap61, sap62, sap114, sap145, slu7, smb1, smd1, smd3, smf1, smg1 and syf2.

The protein resides in the nucleus. Required for both cell cycle progression at G2/M and pre-mRNA splicing. Interacts genetically with the PRP4 kinase. The protein is Pre-mRNA-splicing factor prp5 (prp5) of Schizosaccharomyces pombe (strain 972 / ATCC 24843) (Fission yeast).